The chain runs to 442 residues: MSKTYHFIGIKGSGMSALALMLHQMGYKVQGSDVEKYYFTQRGLEQAGIPILPFDEKNITEDVELIAGNAFREDNNVEIAYAIKNGYKFKRYHEFLGHFMNQFTSFGVAGAHGKTSTTGLLSHSMKNITDTSYLIGDGTGRGSANAQYFVFEADEYERHFMPYHPAYSIITNIDFDHPDYFTSIDDVFSAFDDYAKQVQKGLFVYGEDSNLRKITSNAPIYYYGFEENDDFMATDIIRTTTGSNFKVKHDGQIIGEFHVPAYGRHNILNATAVIANLYVAGFDMALVAEHLKTFSGVKRRFTEKIISDTVIIDDFAHHPTEIIATLDAARQKYPSKEIVAIFQPHTFTRTIALLDDFAEALNEADAVYLAQIYGSAREVDHGDVKVEDLAAKINKPAKVVTVENVSPLLDHDNAIYVFMGAGDIQLYERSFEELLASLQTHM.

Residue 110–116 (GAHGKTS) participates in ATP binding.

This sequence belongs to the MurCDEF family.

The protein resides in the cytoplasm. The enzyme catalyses UDP-N-acetyl-alpha-D-muramate + L-alanine + ATP = UDP-N-acetyl-alpha-D-muramoyl-L-alanine + ADP + phosphate + H(+). Its pathway is cell wall biogenesis; peptidoglycan biosynthesis. Cell wall formation. This is UDP-N-acetylmuramate--L-alanine ligase from Streptococcus thermophilus (strain ATCC BAA-491 / LMD-9).